The primary structure comprises 574 residues: MNTSPGIELGLFIALLAVLNIPLGTHLYKVLDKEGKTVFDPILKPLENLTYKLCSIDRSKEQSWIEYAVGLLCFNFVGILVSYLILRLQSILPLNPEKIGPMAPHIAFNTAISFATNTNWQSYVPEKQVSYFAQMFGLAVPNFTSAATGIAAAAALVRGIVRTEMKTVGNCWVDLIRIHYYLLLPLSLFIAIILLSQGVPQNFNAYVSYIPLELKSSLANLPVKLPQGPIASQEAIKLLGTNGGGFLNANSAHPYENPTPLSNFVEMLSIFLIPSALTYYFGLSCKKLGHGWSIWLTMTFCFLILTLSCFIFEQAGNPLFSSLGIKNQLNMEGKEMRFGIFDSSFFASVTTLASCGAVNSLHDSFQPLAGMIPLFNMGLGELIFGGVGSGLYGILLFVILSVFLFGLMIGRTPGYLGKRIGSYEIKMAVLALMIQYVLILGLSALALNSSWGTAALGNKGPHGLTEVLYAFTSTTENNGSAFGGLNATSKPFALLLGVAMFLGRYFVLIPILAIAGSLANQKRYASQTVFPTGGWLFIFVLGATIFLLAALNFFPALTVGPILEHFMIGMGKSF.

10 helical membrane-spanning segments follow: residues 7 to 27 (IELGLFIALLAVLNIPLGTHL), 65 to 85 (IEYAVGLLCFNFVGILVSYLI), 136 to 156 (FGLAVPNFTSAATGIAAAAAL), 175 to 195 (LIRIHYYLLLPLSLFIAIILL), 264 to 284 (FVEMLSIFLIPSALTYYFGLS), 292 to 312 (WSIWLTMTFCFLILTLSCFIF), 390 to 410 (GLYGILLFVILSVFLFGLMIG), 427 to 447 (MAVLALMIQYVLILGLSALAL), 494 to 514 (LLLGVAMFLGRYFVLIPILAI), and 534 to 554 (GWLFIFVLGATIFLLAALNFF).

The protein belongs to the KdpA family. In terms of assembly, the system is composed of three essential subunits: KdpA, KdpB and KdpC.

The protein localises to the cell inner membrane. Its function is as follows. Part of the high-affinity ATP-driven potassium transport (or Kdp) system, which catalyzes the hydrolysis of ATP coupled with the electrogenic transport of potassium into the cytoplasm. This subunit binds the periplasmic potassium ions and delivers the ions to the membrane domain of KdpB through an intramembrane tunnel. In Methylacidiphilum infernorum (isolate V4) (Methylokorus infernorum (strain V4)), this protein is Potassium-transporting ATPase potassium-binding subunit.